The primary structure comprises 181 residues: Large ribosomal subunit protein uL5 (181 aa).

It belongs to the universal ribosomal protein uL5 family. In terms of assembly, part of the 50S ribosomal subunit; part of the 5S rRNA/L5/L18/L25 subcomplex. Contacts the 5S rRNA and the P site tRNA. Forms a bridge to the 30S subunit in the 70S ribosome.

Functionally, this is one of the proteins that bind and probably mediate the attachment of the 5S RNA into the large ribosomal subunit, where it forms part of the central protuberance. In the 70S ribosome it contacts protein S13 of the 30S subunit (bridge B1b), connecting the 2 subunits; this bridge is implicated in subunit movement. Contacts the P site tRNA; the 5S rRNA and some of its associated proteins might help stabilize positioning of ribosome-bound tRNAs. In Campylobacter jejuni subsp. jejuni serotype O:6 (strain 81116 / NCTC 11828), this protein is Large ribosomal subunit protein uL5.